We begin with the raw amino-acid sequence, 222 residues long: Thiol:disulfide interchange protein DsbL (222 aa).

Residues 1–27 (MSKLGISSLFKTILLTAALAVSFTASA) form the signal peptide. A Thioredoxin domain is found at 28-221 (FTEGTDYMVL…MADLIRELAS (194 aa)). Cys-56 and Cys-59 form a disulfide bridge.

It belongs to the thioredoxin family. DsbL subfamily. In terms of assembly, interacts with DsbI.

It localises to the periplasm. Involved in disulfide-bond formation. Acts by transferring its disulfide bond to other proteins. Part of a redox system composed of DsbI and DsbL that mediates formation of an essential disulfide bond in AssT. In Escherichia coli O6:H1 (strain CFT073 / ATCC 700928 / UPEC), this protein is Thiol:disulfide interchange protein DsbL.